Consider the following 101-residue polypeptide: Phosphoribosyl-AMP cyclohydrolase (101 aa).

Residue Asp-71 coordinates Mg(2+). Residue Cys-72 participates in Zn(2+) binding. Asp-73 and Asp-75 together coordinate Mg(2+). Positions 88 and 95 each coordinate Zn(2+).

The protein belongs to the PRA-CH family. As to quaternary structure, homodimer. Mg(2+) serves as cofactor. It depends on Zn(2+) as a cofactor.

The protein localises to the cytoplasm. It catalyses the reaction 1-(5-phospho-beta-D-ribosyl)-5'-AMP + H2O = 1-(5-phospho-beta-D-ribosyl)-5-[(5-phospho-beta-D-ribosylamino)methylideneamino]imidazole-4-carboxamide. The protein operates within amino-acid biosynthesis; L-histidine biosynthesis; L-histidine from 5-phospho-alpha-D-ribose 1-diphosphate: step 3/9. Catalyzes the hydrolysis of the adenine ring of phosphoribosyl-AMP. In Bacillus cereus (strain 03BB102), this protein is Phosphoribosyl-AMP cyclohydrolase.